Here is a 478-residue protein sequence, read N- to C-terminus: Ribosomal RNA small subunit methyltransferase F (478 aa).

S-adenosyl-L-methionine contacts are provided by residues 125–131, Glu-149, Asp-176, and Asp-194; that span reads AAAPGSK. Cys-247 functions as the Nucleophile in the catalytic mechanism.

Belongs to the class I-like SAM-binding methyltransferase superfamily. RsmB/NOP family.

The protein resides in the cytoplasm. It carries out the reaction cytidine(1407) in 16S rRNA + S-adenosyl-L-methionine = 5-methylcytidine(1407) in 16S rRNA + S-adenosyl-L-homocysteine + H(+). Specifically methylates the cytosine at position 1407 (m5C1407) of 16S rRNA. This is Ribosomal RNA small subunit methyltransferase F from Serratia proteamaculans (strain 568).